The primary structure comprises 512 residues: Maturase K (512 aa).

This sequence belongs to the intron maturase 2 family. MatK subfamily.

The protein localises to the plastid. Its subcellular location is the chloroplast. Functionally, usually encoded in the trnK tRNA gene intron. Probably assists in splicing its own and other chloroplast group II introns. This is Maturase K from Soldanella alpina (Alpine snowbell).